Reading from the N-terminus, the 1202-residue chain is Ribonuclease P protein component, mitochondrial (1202 aa).

The transit peptide at 1 to 122 (MAFKSFIYSK…NNNNNQHRYY (122 aa)) directs the protein to the mitochondrion. The segment at 109–134 (NYVNNNNNNQHRYYSTGPTLPTNQYD) is disordered. Residues 118-134 (QHRYYSTGPTLPTNQYD) are compositionally biased toward polar residues.

In terms of assembly, consists of an RNA moiety (RPM1) and the protein component (RPM2). Both are necessary for full enzymatic activity.

It is found in the mitochondrion. The enzyme catalyses Endonucleolytic cleavage of RNA, removing 5'-extranucleotides from tRNA precursor.. In terms of biological role, ribonuclease P generates mature tRNA molecules by cleaving their 5'-ends. The protein is Ribonuclease P protein component, mitochondrial (RPM2) of Saccharomyces cerevisiae (strain ATCC 204508 / S288c) (Baker's yeast).